Here is a 666-residue protein sequence, read N- to C-terminus: Probable potassium transport system protein Kup (666 aa).

Transmembrane regions (helical) follow at residues 16-36, 58-78, 98-118, 141-161, 165-185, 221-241, 253-273, 299-319, 343-363, 373-393, 399-419, and 424-444; these read GFII…LYTM, ISLI…LIAL, ISPW…SDGA, IYQN…VLFG, FGTG…FSFL, IFIL…YSDL, WPFV…WILA, LATL…FTLI, LYIP…VLAF, YGLA…YYLI, PILA…FFLA, and FMHG…VMFI.

It belongs to the HAK/KUP transporter (TC 2.A.72) family.

It is found in the cell membrane. The enzyme catalyses K(+)(in) + H(+)(in) = K(+)(out) + H(+)(out). Transport of potassium into the cell. Likely operates as a K(+):H(+) symporter. This chain is Probable potassium transport system protein Kup, found in Streptococcus pyogenes serotype M28 (strain MGAS6180).